Reading from the N-terminus, the 103-residue chain is Large ribosomal subunit protein bL21 (103 aa).

It belongs to the bacterial ribosomal protein bL21 family. Part of the 50S ribosomal subunit. Contacts protein L20.

Its function is as follows. This protein binds to 23S rRNA in the presence of protein L20. The protein is Large ribosomal subunit protein bL21 of Bordetella avium (strain 197N).